The following is a 321-amino-acid chain: Epiphycan (321 aa).

An N-terminal signal peptide occupies residues 1-19 (MKALARLIVGLLILDAAVT). A glycan (O-linked (GalNAc...) threonine) is linked at Thr-60. Ser-64 carries an O-linked (Xyl...) (dermatan sulfate) serine glycan. Positions 64 to 100 (SGNRELLTPPPQPEEAEEEEEEESTPRLIDGSSPQEP) are disordered. Over residues 77 to 86 (EEAEEEEEEE) the composition is skewed to acidic residues. An O-linked (GalNAc...) serine glycan is attached at Ser-95. The 38-residue stretch at 105-142 (VLGPQTNEDFPTCLLCTCISTTVYCDDHELDAIPPLPK) folds into the LRRNT domain. Residues Cys-117 and Cys-129 are joined by a disulfide bond. 5 LRR repeats span residues 143-164 (NTAY…DFAS), 167-188 (DLRR…AFRK), 191-212 (QLRE…PTTL), 237-257 (DLHH…PLPE), and 258-279 (NLRA…TFCN). Cys-278 and Cys-311 are disulfide-bonded. Asn-282 carries N-linked (GlcNAc...) asparagine glycosylation. The stretch at 289 to 309 (ALEDIRLDGNPINLSKTPQAY) is one LRR 6 repeat.

The protein belongs to the small leucine-rich proteoglycan (SLRP) family. SLRP class III subfamily. Post-translationally, a long and a short form present in approximately equimolar amounts may arise by proteolysis or cleavage by exopeptidases. The O-linked polysaccharides on Thr-60 and Ser-95 are probably the mucin type linked to GalNAc. There is one glycosaminoglycan chain, known to be dermatan sulfate, and it is probably the O-glycosylation at Ser-64. As to expression, preferentially expressed in the zone of flattened chondrocytes of the developing limb cartilage.

Its subcellular location is the secreted. It localises to the extracellular space. It is found in the extracellular matrix. In terms of biological role, may have a role in bone formation and also in establishing the ordered structure of cartilage through matrix organization. The protein is Epiphycan (EPYC) of Bos taurus (Bovine).